Here is a 217-residue protein sequence, read N- to C-terminus: ATP phosphoribosyltransferase (217 aa).

It belongs to the ATP phosphoribosyltransferase family. Short subfamily. In terms of assembly, heteromultimer composed of HisG and HisZ subunits.

It is found in the cytoplasm. It carries out the reaction 1-(5-phospho-beta-D-ribosyl)-ATP + diphosphate = 5-phospho-alpha-D-ribose 1-diphosphate + ATP. It functions in the pathway amino-acid biosynthesis; L-histidine biosynthesis; L-histidine from 5-phospho-alpha-D-ribose 1-diphosphate: step 1/9. Catalyzes the condensation of ATP and 5-phosphoribose 1-diphosphate to form N'-(5'-phosphoribosyl)-ATP (PR-ATP). Has a crucial role in the pathway because the rate of histidine biosynthesis seems to be controlled primarily by regulation of HisG enzymatic activity. The sequence is that of ATP phosphoribosyltransferase from Syntrophomonas wolfei subsp. wolfei (strain DSM 2245B / Goettingen).